A 491-amino-acid polypeptide reads, in one-letter code: G2/mitotic-specific cyclin-A (491 aa).

The disordered stretch occupies residues 1–21 (MASFQIHQDMSNKENPGIKIP). The Cyclin N-terminal domain occupies 206-332 (DILEYFRESE…ILKILSFDLC (127 aa)).

It belongs to the cyclin family. Cyclin AB subfamily. As to quaternary structure, component of the Frs-CycA-Cdk1 complex composed of CycA, Cdk1 and Z600. Interacts (via C-terminus) with Z600. Interacts with otu and (via C-terminus) with bam; the interaction stabilizes CycA by negatively regulating its ubiquitination. In terms of processing, ubiquitinated. Ubiquitination state is negatively regulated by a deubiquitinase complex made up of bam and otu.

In terms of biological role, essential for the control of the cell cycle at the G2/M (mitosis) transition. Interacts with the Cdk1 and Cdk2 protein kinases to form MPF. G2/M cyclins accumulate steadily during G2 and are abruptly destroyed at mitosis. This is G2/mitotic-specific cyclin-A (CycA) from Drosophila melanogaster (Fruit fly).